The primary structure comprises 269 residues: Phosphate import ATP-binding protein PstB (269 aa).

One can recognise an ABC transporter domain in the interval 21 to 264 (SEVRNLSFYY…PKNKQTEDYI (244 aa)). 53 to 60 (GPSGCGKS) contacts ATP.

This sequence belongs to the ABC transporter superfamily. Phosphate importer (TC 3.A.1.7) family. In terms of assembly, the complex is composed of two ATP-binding proteins (PstB), two transmembrane proteins (PstC and PstA) and a solute-binding protein (PstS).

The protein localises to the cell inner membrane. It catalyses the reaction phosphate(out) + ATP + H2O = ADP + 2 phosphate(in) + H(+). Its function is as follows. Part of the ABC transporter complex PstSACB involved in phosphate import. Responsible for energy coupling to the transport system. This is Phosphate import ATP-binding protein PstB from Nitrosospira multiformis (strain ATCC 25196 / NCIMB 11849 / C 71).